Consider the following 442-residue polypeptide: tRNA pseudouridine(38/39) synthase (442 aa).

Asp-151 functions as the Nucleophile in the catalytic mechanism. Residue Tyr-222 coordinates substrate.

The protein belongs to the tRNA pseudouridine synthase TruA family.

It is found in the nucleus. The enzyme catalyses uridine(38/39) in tRNA = pseudouridine(38/39) in tRNA. Its function is as follows. Formation of pseudouridines at positions 38 and 39 in the anticodon stem and loop of transfer RNAs. This chain is tRNA pseudouridine(38/39) synthase (DEG1), found in Saccharomyces cerevisiae (strain ATCC 204508 / S288c) (Baker's yeast).